Reading from the N-terminus, the 778-residue chain is Pentatricopeptide repeat-containing protein At3g09650, chloroplastic (778 aa).

The N-terminal 65 residues, 1–65 (MNILRPPTSS…RSASGTANSS (65 aa)), are a transit peptide targeting the chloroplast. PPR repeat units follow at residues 235-269 (DTAAFNAVLNACANLGDTDKYWKLFEEMSEWDCEP), 270-304 (DVLTYNVMIKLCARVGRKELIVFVLERIIDKGIKV), and 305-339 (CMTTMHSLVAAYVGFGDLRTAERIVQAMREKRRDL). The disordered stretch occupies residues 351–381 (LKEKEEEEAEDDEDAFEDDEDSGYSARDEVS). Over residues 355-372 (EEEEAEDDEDAFEDDEDS) the composition is skewed to acidic residues. PPR repeat units follow at residues 413 to 443 (DSRIYTTLMKGYMKNGRVADTARMLEAMRRQ), 451 to 485 (DEVTYTTVVSAFVNAGLMDRARQVLAEMARMGVPA), 486 to 521 (NRITYNVLLKGYCKQLQIDRAEDLLREMTEDAGIEP), 522 to 556 (DVVSYNIIIDGCILIDDSAGALAFFNEMRTRGIAP), 557 to 587 (TKISYTTLMKAFAMSGQPKLANRVFDEMMND), 593 to 627 (DLIAWNMLVEGYCRLGLIEDAQRVVSRMKENGFYP), and 628 to 658 (NVATYGSLANGVSQARKPGDALLLWKEIKER).

The protein belongs to the PPR family. P subfamily.

Its subcellular location is the plastid. It localises to the chloroplast stroma. Involved in the processing of polycistronic chloroplast psbB-psbT-psbH-petB-petD transcript. Could bind RNA. The sequence is that of Pentatricopeptide repeat-containing protein At3g09650, chloroplastic (HCF152) from Arabidopsis thaliana (Mouse-ear cress).